Here is a 299-residue protein sequence, read N- to C-terminus: Bifunctional methyltransferase-like/endonuclease (299 aa).

The tract at residues 1-80 is probable methylated-DNA--protein-cysteine methyltransferase-like; that stretch reads MLSSKLLDIN…NLIVSPMQKA (80 aa). Positions 81 to 299 are endonuclease V; sequence LLEKEVKIIG…GRGDSNPGRD (219 aa). Residues Asp135 and Asn197 each contribute to the Mg(2+) site.

The protein in the N-terminal section; belongs to the MGMT family. It in the C-terminal section; belongs to the endonuclease V family. Mg(2+) is required as a cofactor.

Its subcellular location is the cytoplasm. The enzyme catalyses Endonucleolytic cleavage at apurinic or apyrimidinic sites to products with a 5'-phosphate.. Its function is as follows. DNA repair enzyme involved in the repair of deaminated bases. Selectively cleaves double-stranded DNA at the second phosphodiester bond 3' to a deoxyinosine leaving behind the intact lesion on the nicked DNA. In Nanoarchaeum equitans (strain Kin4-M), this protein is Bifunctional methyltransferase-like/endonuclease.